Consider the following 148-residue polypeptide: uncharacterized protein (148 aa).

The segment covering 97–112 has biased composition (basic and acidic residues); the sequence is KKLDEQRMPGKPKNTE. Residues 97–126 form a disordered region; that stretch reads KKLDEQRMPGKPKNTEGSKSTIRKKANVGN.

This is an uncharacterized protein from Caenorhabditis elegans.